A 156-amino-acid chain; its full sequence is Large ribosomal subunit protein uL22c (156 aa).

This sequence belongs to the universal ribosomal protein uL22 family. In terms of assembly, part of the 50S ribosomal subunit.

The protein localises to the plastid. It localises to the chloroplast. This protein binds specifically to 23S rRNA. Functionally, the globular domain of the protein is located near the polypeptide exit tunnel on the outside of the subunit, while an extended beta-hairpin is found that lines the wall of the exit tunnel in the center of the 70S ribosome. This is Large ribosomal subunit protein uL22c (rpl22) from Buxus microphylla (Littleleaf boxwood).